Here is a 214-residue protein sequence, read N- to C-terminus: Nascent polypeptide-associated complex subunit alpha (214 aa).

The segment at 1 to 80 (MPGEATETVP…SEKKARKAMS (80 aa)) is disordered. A compositionally biased stretch (acidic residues) spans 29–40 (SDSDDSPPELEQ). Residues 41–56 (DSTQTTTQQAQLAAAA) show a composition bias toward low complexity. One can recognise an NAC-A/B domain in the interval 69–134 (SRSEKKARKA…AKIEDLSQQA (66 aa)). Residues 175 to 212 (VEVKDIELVMSQANVSRAKAVRALKNNSNDIVNAIMEL) form the UBA domain.

It belongs to the NAC-alpha family.

Its function is as follows. May promote appropriate targeting of ribosome-nascent polypeptide complexes. The sequence is that of Nascent polypeptide-associated complex subunit alpha (naca) from Xenopus tropicalis (Western clawed frog).